A 4743-amino-acid chain; its full sequence is Apolipoprotein B-100 (4743 aa).

The N-terminal stretch at 1–27 (MGPQRPALRAPLLLLFLLLFLDTSVWA) is a signal peptide. The tract at residues 29-113 (DATRFKHLRK…KNSEEFASAM (85 aa)) is heparin-binding. In terms of domain architecture, Vitellogenin spans 33–660 (FKHLRKYVYS…PSSYLPKESM (628 aa)). Cysteine 65 and cysteine 84 are oxidised to a cystine. An N-linked (GlcNAc...) asparagine glycan is attached at asparagine 172. Intrachain disulfides connect cysteine 173-cysteine 199, cysteine 232-cysteine 248, cysteine 372-cysteine 377, and cysteine 466-cysteine 501. A heparin-binding region spans residues 219 to 293 (VRPLSTLISS…RFFRGGINQV (75 aa)). The tract at residues 890–947 (NTNFFHESGLEARVALKAGQLKVIIPSPKRPVKLFSGSNTLHLVSTTKTEVIPPLIEN) is heparin-binding. Cysteine 954 and cysteine 964 are joined by a disulfide. 4 N-linked (GlcNAc...) asparagine glycosylation sites follow: asparagine 971, asparagine 1336, asparagine 1345, and asparagine 1491. Lysine 1973 carries the post-translational modification N6-acetyllysine. Serine 2006 carries the post-translational modification Phosphoserine. A heparin-binding region spans residues 2010-2145 (NDAFDEPREF…EKLSQLETYA (136 aa)). 8 N-linked (GlcNAc...) asparagine glycosylation sites follow: asparagine 2094, asparagine 2522, asparagine 2662, asparagine 2741, asparagine 2791, asparagine 2897, asparagine 2944, and asparagine 3063. Positions 3123–3198 (FLKTTKQSFD…KIKFDKYKTE (76 aa)) are heparin-binding. The tract at residues 3136-3146 (KAQYKKNRDKH) is basic (possible receptor binding region). Asparagine 3186, asparagine 3299, and asparagine 3321 each carry an N-linked (GlcNAc...) asparagine glycan. Residues 3336–3356 (VTDALQYKLEGTSRLMRKKVL) form an LDL receptor binding region. The heparin-binding stretch occupies residues 3346 to 3479 (GTSRLMRKKV…QEYSGSVANE (134 aa)). Residues 3349-3357 (RLMRKKVLK) are basic (possible receptor binding region). N-linked (GlcNAc...) asparagine glycans are attached at residues asparagine 3428, asparagine 3715, and asparagine 3828. Serine 3981 bears the Phosphoserine mark. Residue threonine 3985 is modified to Phosphothreonine. N-linked (GlcNAc...) asparagine glycans are attached at residues asparagine 4203 and asparagine 4232.

As to quaternary structure, interacts with PCSK9. Interacts with MTTP. Interacts with AUP1. Interacts with CIDEB. Palmitoylated; structural requirement for proper assembly of the hydrophobic core of the lipoprotein particle. In terms of tissue distribution, detected in intestine and liver (at protein level).

The protein resides in the cytoplasm. Its subcellular location is the secreted. The protein localises to the lipid droplet. In terms of biological role, apolipoprotein B is a major protein constituent of chylomicrons (apo B-48), LDL (apo B-100) and VLDL (apo B-100). Apo B-100 functions as a recognition signal for the cellular binding and internalization of LDL particles by the apoB/E receptor. The sequence is that of Apolipoprotein B-100 (Apob) from Rattus norvegicus (Rat).